A 419-amino-acid polypeptide reads, in one-letter code: S-adenosylmethionine synthase (419 aa).

H14 contributes to the ATP binding site. D16 is a binding site for Mg(2+). Residue E42 participates in K(+) binding. 2 residues coordinate L-methionine: E55 and Q98. Residues 98–108 (QSADINQGVDR) form a flexible loop region. ATP is bound by residues 164–166 (DAK), 242–243 (KF), D251, 257–258 (RK), A274, and K278. D251 is an L-methionine binding site. Residue K282 coordinates L-methionine.

Belongs to the AdoMet synthase family. As to quaternary structure, homotetramer; dimer of dimers. Mg(2+) serves as cofactor. K(+) is required as a cofactor.

The protein localises to the cytoplasm. It carries out the reaction L-methionine + ATP + H2O = S-adenosyl-L-methionine + phosphate + diphosphate. It functions in the pathway amino-acid biosynthesis; S-adenosyl-L-methionine biosynthesis; S-adenosyl-L-methionine from L-methionine: step 1/1. Catalyzes the formation of S-adenosylmethionine (AdoMet) from methionine and ATP. The overall synthetic reaction is composed of two sequential steps, AdoMet formation and the subsequent tripolyphosphate hydrolysis which occurs prior to release of AdoMet from the enzyme. This chain is S-adenosylmethionine synthase, found in Cytophaga hutchinsonii (strain ATCC 33406 / DSM 1761 / CIP 103989 / NBRC 15051 / NCIMB 9469 / D465).